The following is a 130-amino-acid chain: Putative pre-16S rRNA nuclease (130 aa).

This sequence belongs to the YqgF nuclease family.

The protein localises to the cytoplasm. In terms of biological role, could be a nuclease involved in processing of the 5'-end of pre-16S rRNA. This is Putative pre-16S rRNA nuclease from Sulfurimonas denitrificans (strain ATCC 33889 / DSM 1251) (Thiomicrospira denitrificans (strain ATCC 33889 / DSM 1251)).